We begin with the raw amino-acid sequence, 264 residues long: Small ribosomal subunit protein eS1 (264 aa).

The interval 232–264 (HGEGGGSGKPSGDETGAKVERADGYEPPVQESV) is disordered. Residues 242–255 (SGDETGAKVERADG) show a composition bias toward basic and acidic residues.

Belongs to the eukaryotic ribosomal protein eS1 family. In terms of assembly, component of the small ribosomal subunit. Mature ribosomes consist of a small (40S) and a large (60S) subunit. The 40S subunit contains about 33 different proteins and 1 molecule of RNA (18S). The 60S subunit contains about 49 different proteins and 3 molecules of RNA (28S, 5.8S and 5S). Part of the small subunit (SSU) processome, composed of more than 70 proteins and the RNA chaperone small nucleolar RNA (snoRNA) U3.

Its subcellular location is the cytoplasm. The protein resides in the nucleus. It localises to the nucleolus. Component of the small ribosomal subunit. The ribosome is a large ribonucleoprotein complex responsible for the synthesis of proteins in the cell. Part of the small subunit (SSU) processome, first precursor of the small eukaryotic ribosomal subunit. During the assembly of the SSU processome in the nucleolus, many ribosome biogenesis factors, an RNA chaperone and ribosomal proteins associate with the nascent pre-rRNA and work in concert to generate RNA folding, modifications, rearrangements and cleavage as well as targeted degradation of pre-ribosomal RNA by the RNA exosome. May play a role during erythropoiesis. The protein is Small ribosomal subunit protein eS1 of Ophiophagus hannah (King cobra).